The following is a 145-amino-acid chain: MIALIQRVTRASVTVEDEVTGEIGPGLLVLLGVQKEDDEQKANRLCERVLGYRIFSDADGKMNLNVQQAGGSVLVVSQFTLAADTERGMRPSFSGGAAPDRAQALYEYFVERCRQQAINTQTGRFAADMQVELVNDGPVTFWLQV.

A Gly-cisPro motif, important for rejection of L-amino acids motif is present at residues 137–138 (GP).

This sequence belongs to the DTD family. As to quaternary structure, homodimer.

The protein localises to the cytoplasm. The catalysed reaction is glycyl-tRNA(Ala) + H2O = tRNA(Ala) + glycine + H(+). It carries out the reaction a D-aminoacyl-tRNA + H2O = a tRNA + a D-alpha-amino acid + H(+). In terms of biological role, an aminoacyl-tRNA editing enzyme that deacylates mischarged D-aminoacyl-tRNAs. Also deacylates mischarged glycyl-tRNA(Ala), protecting cells against glycine mischarging by AlaRS. Acts via tRNA-based rather than protein-based catalysis; rejects L-amino acids rather than detecting D-amino acids in the active site. By recycling D-aminoacyl-tRNA to D-amino acids and free tRNA molecules, this enzyme counteracts the toxicity associated with the formation of D-aminoacyl-tRNA entities in vivo and helps enforce protein L-homochirality. The sequence is that of D-aminoacyl-tRNA deacylase from Salmonella agona (strain SL483).